An 86-amino-acid polypeptide reads, in one-letter code: Sodium channel neurotoxin MeuNaTxalpha-5 (86 aa).

An N-terminal signal peptide occupies residues Met1–Ser19. The region spanning Arg21 to His85 is the LCN-type CS-alpha/beta domain. 4 disulfide bridges follow: Cys31-Cys84, Cys35-Cys57, Cys43-Cys67, and Cys47-Cys69. Position 86 (Arg86) is a propeptide, removed by a carboxypeptidase.

The protein belongs to the long (4 C-C) scorpion toxin superfamily. Sodium channel inhibitor family. Alpha subfamily. As to expression, expressed by the venom gland.

The protein localises to the secreted. Its function is as follows. Alpha toxins bind voltage-independently at site-3 of sodium channels (Nav) and inhibit the inactivation of the activated channels, thereby blocking neuronal transmission. This toxin inhibits inactivation of Nav1.6/SCN8A (EC(50)=790 nM) and drosophila DmNav1 (EC(50)=280 nM). The toxin (1 uM) does not significantly shift the midpoint of activation at the two channels, but induces a significant depolarizing shift in the V(1/2) of inactivation of the channels. Has antimicrobial activity. In Mesobuthus eupeus (Lesser Asian scorpion), this protein is Sodium channel neurotoxin MeuNaTxalpha-5.